We begin with the raw amino-acid sequence, 206 residues long: Adenylyl-sulfate kinase (206 aa).

Residue glycine 31–serine 38 coordinates ATP. Serine 105 acts as the Phosphoserine intermediate in catalysis.

The protein belongs to the APS kinase family.

The catalysed reaction is adenosine 5'-phosphosulfate + ATP = 3'-phosphoadenylyl sulfate + ADP + H(+). It functions in the pathway sulfur metabolism; hydrogen sulfide biosynthesis; sulfite from sulfate: step 2/3. Functionally, catalyzes the synthesis of activated sulfate. The chain is Adenylyl-sulfate kinase (sD) from Emericella nidulans (strain FGSC A4 / ATCC 38163 / CBS 112.46 / NRRL 194 / M139) (Aspergillus nidulans).